Here is a 465-residue protein sequence, read N- to C-terminus: Ribulose bisphosphate carboxylase large chain (465 aa).

Lys-4 carries the N6,N6,N6-trimethyllysine modification. Positions 113 and 163 each coordinate substrate. Residue Lys-165 is the Proton acceptor of the active site. Lys-167 contributes to the substrate binding site. Residues Lys-191, Asp-193, and Glu-194 each coordinate Mg(2+). Lys-191 carries the post-translational modification N6-carboxylysine. His-284 (proton acceptor) is an active-site residue. Substrate-binding residues include Arg-285, His-317, and Ser-369.

This sequence belongs to the RuBisCO large chain family. Type I subfamily. Heterohexadecamer of 8 large chains and 8 small chains; disulfide-linked. The disulfide link is formed within the large subunit homodimers. It depends on Mg(2+) as a cofactor. In terms of processing, the disulfide bond which can form in the large chain dimeric partners within the hexadecamer appears to be associated with oxidative stress and protein turnover.

The protein resides in the plastid. It localises to the chloroplast. The catalysed reaction is 2 (2R)-3-phosphoglycerate + 2 H(+) = D-ribulose 1,5-bisphosphate + CO2 + H2O. It catalyses the reaction D-ribulose 1,5-bisphosphate + O2 = 2-phosphoglycolate + (2R)-3-phosphoglycerate + 2 H(+). RuBisCO catalyzes two reactions: the carboxylation of D-ribulose 1,5-bisphosphate, the primary event in carbon dioxide fixation, as well as the oxidative fragmentation of the pentose substrate in the photorespiration process. Both reactions occur simultaneously and in competition at the same active site. The chain is Ribulose bisphosphate carboxylase large chain from Idesia polycarpa (Iigiri tree).